The primary structure comprises 266 residues: rRNA adenine N-6-methyltransferase (266 aa).

Residues His14, Thr16, Gly41, Glu62, Asp87, and Asn103 each contribute to the S-adenosyl-L-methionine site.

Belongs to the class I-like SAM-binding methyltransferase superfamily. rRNA adenine N(6)-methyltransferase family.

Functionally, involved in erythromycin resistance. In Bacteroides fragilis, this protein is rRNA adenine N-6-methyltransferase (ermF).